Consider the following 254-residue polypeptide: 5-oxoprolinase subunit A (254 aa).

This sequence belongs to the LamB/PxpA family. In terms of assembly, forms a complex composed of PxpA, PxpB and PxpC.

The catalysed reaction is 5-oxo-L-proline + ATP + 2 H2O = L-glutamate + ADP + phosphate + H(+). Functionally, catalyzes the cleavage of 5-oxoproline to form L-glutamate coupled to the hydrolysis of ATP to ADP and inorganic phosphate. In Burkholderia vietnamiensis (strain G4 / LMG 22486) (Burkholderia cepacia (strain R1808)), this protein is 5-oxoprolinase subunit A.